Here is a 934-residue protein sequence, read N- to C-terminus: 2-oxoglutarate dehydrogenase E1 component (934 aa).

Belongs to the alpha-ketoglutarate dehydrogenase family. Homodimer. Part of the 2-oxoglutarate dehydrogenase (OGDH) complex composed of E1 (2-oxoglutarate dehydrogenase), E2 (dihydrolipoamide succinyltransferase) and E3 (dihydrolipoamide dehydrogenase); the complex contains multiple copies of the three enzymatic components (E1, E2 and E3). It depends on thiamine diphosphate as a cofactor.

The enzyme catalyses N(6)-[(R)-lipoyl]-L-lysyl-[protein] + 2-oxoglutarate + H(+) = N(6)-[(R)-S(8)-succinyldihydrolipoyl]-L-lysyl-[protein] + CO2. In terms of biological role, E1 component of the 2-oxoglutarate dehydrogenase (OGDH) complex which catalyzes the decarboxylation of 2-oxoglutarate, the first step in the conversion of 2-oxoglutarate to succinyl-CoA and CO(2). The protein is 2-oxoglutarate dehydrogenase E1 component of Staphylococcus epidermidis (strain ATCC 35984 / DSM 28319 / BCRC 17069 / CCUG 31568 / BM 3577 / RP62A).